We begin with the raw amino-acid sequence, 94 residues long: Small ribosomal subunit protein uS19 (94 aa).

It belongs to the universal ribosomal protein uS19 family.

In terms of biological role, protein S19 forms a complex with S13 that binds strongly to the 16S ribosomal RNA. This chain is Small ribosomal subunit protein uS19, found in Hamiltonella defensa subsp. Acyrthosiphon pisum (strain 5AT).